The chain runs to 282 residues: Pantothenate synthetase (282 aa).

30–37 contributes to the ATP binding site; sequence MGALHRGH. H37 acts as the Proton donor in catalysis. Residue Q61 participates in (R)-pantoate binding. Residue Q61 coordinates beta-alanine. 147–150 serves as a coordination point for ATP; the sequence is GEKD. (R)-pantoate is bound at residue Q153. Residue 184–187 coordinates ATP; sequence LSSR.

It belongs to the pantothenate synthetase family. In terms of assembly, homodimer.

It is found in the cytoplasm. It carries out the reaction (R)-pantoate + beta-alanine + ATP = (R)-pantothenate + AMP + diphosphate + H(+). Its pathway is cofactor biosynthesis; (R)-pantothenate biosynthesis; (R)-pantothenate from (R)-pantoate and beta-alanine: step 1/1. In terms of biological role, catalyzes the condensation of pantoate with beta-alanine in an ATP-dependent reaction via a pantoyl-adenylate intermediate. The polypeptide is Pantothenate synthetase (Rhizorhabdus wittichii (strain DSM 6014 / CCUG 31198 / JCM 15750 / NBRC 105917 / EY 4224 / RW1) (Sphingomonas wittichii)).